The sequence spans 463 residues: Protein translocase subunit SecY (463 aa).

Topologically, residues 1-20 (MGFMDFLAKMGENLPAVSKP) are cytoplasmic. The chain crosses the membrane as a helical span at residues 21–47 (KDKPTLTRKLLWTFIGLIVYLLMASIP). The Extracellular portion of the chain corresponds to 48 to 60 (LYGVTSSNSFLSN). The helical intramembrane region spans 61 to 68 (FLAQQIIF). Residues 61–89 (FLAQQIIFASSQGTLAQLGIGPVITSGLI) form a discontinuously helical membrane-spanning segment. Residues 69–80 (ASSQGTLAQLGI) lie within the membrane without spanning it. The segment at residues 81–89 (GPVITSGLI) is an intramembrane region (helical). Over 90 to 110 (MQILVGSKLINVDLTTQEGKS) the chain is Cytoplasmic. Residues 111 to 134 (KFTQAEKALALIFIIVESSLFGYV) form a helical membrane-spanning segment. Residues 135–142 (FTRATSNI) are Extracellular-facing. Residues 143-167 (LLPIIVVVQLIIASYIILLLDEMIQ) traverse the membrane as a helical segment. At 168-174 (KGWGLGS) the chain is on the cytoplasmic side. Residues 175-193 (GVSLFIMAGIMKVIFWNMF) form a helical membrane-spanning segment. Topologically, residues 194–236 (GIVSVQSQNLPVGFFPLLVSYITSGRNLQEIVLNTSSTTPYQP) are extracellular. The helical transmembrane segment at 237 to 258 (DLIGLIATVGLTILIVYLVNTN) threads the bilayer. Topologically, residues 259-283 (IYIPVTTQRLRGIRTTVPLNFLYVS) are cytoplasmic. The chain crosses the membrane as a helical span at residues 284–305 (SIPVIFVSVLGADIQLFASLAN). The Extracellular portion of the chain corresponds to 306-341 (SISNSASGILTDIANAFFFPPQGVPHSVYALVVDPV). The helical transmembrane segment at 342–361 (GAAIYAAVFIVLSIVFGMLW) threads the bilayer. Residues 362-404 (IDVAGLDPKTQAEQMIRSGIEIPGMRTNPRIIEGILSKYIYAL) are Cytoplasmic-facing. A helical membrane pass occupies residues 405 to 423 (GFFSSLIVGLIAVVATFLG). The Extracellular portion of the chain corresponds to 424-426 (TYG). Residues 427–441 (TGVGLLLAITIAMQY) traverse the membrane as a helical segment. Topologically, residues 442–463 (YNLLAYERTLEMYPLLKRIVGE) are cytoplasmic.

The protein belongs to the SecY/SEC61-alpha family. As to quaternary structure, component of the Sec protein translocase complex. Heterotrimer consisting of alpha (SecY), beta (SecG) and gamma (SecE) subunits. The heterotrimers can form oligomers, although 1 heterotrimer is thought to be able to translocate proteins. Interacts with the ribosome. May interact with SecDF, and other proteins may be involved.

The protein localises to the cell membrane. In terms of biological role, the central subunit of the protein translocation channel SecYEG. Consists of two halves formed by TMs 1-5 and 6-10. These two domains form a lateral gate at the front which open onto the bilayer between TMs 2 and 7, and are clamped together by SecE at the back. The channel is closed by both a pore ring composed of hydrophobic SecY resides and a short helix (helix 2A) on the extracellular side of the membrane which forms a plug. The plug probably moves laterally to allow the channel to open. The ring and the pore may move independently. The sequence is that of Protein translocase subunit SecY from Sulfolobus acidocaldarius (strain ATCC 33909 / DSM 639 / JCM 8929 / NBRC 15157 / NCIMB 11770).